We begin with the raw amino-acid sequence, 126 residues long: Small ribosomal subunit protein uS12 (126 aa).

Positions 1–26 (MPTINQLVRKGRASETTKSKSPALQD) are disordered. The residue at position 89 (Asp89) is a 3-methylthioaspartic acid. The tract at residues 101–126 (SLDTQGVKDRKQARSKYGAKRAKAAK) is disordered. Residues 113-126 (ARSKYGAKRAKAAK) are compositionally biased toward basic residues.

The protein belongs to the universal ribosomal protein uS12 family. Part of the 30S ribosomal subunit. Contacts proteins S8 and S17. May interact with IF1 in the 30S initiation complex.

Its function is as follows. With S4 and S5 plays an important role in translational accuracy. Interacts with and stabilizes bases of the 16S rRNA that are involved in tRNA selection in the A site and with the mRNA backbone. Located at the interface of the 30S and 50S subunits, it traverses the body of the 30S subunit contacting proteins on the other side and probably holding the rRNA structure together. The combined cluster of proteins S8, S12 and S17 appears to hold together the shoulder and platform of the 30S subunit. This is Small ribosomal subunit protein uS12 from Burkholderia pseudomallei (strain 1106a).